Here is an 876-residue protein sequence, read N- to C-terminus: Alanine--tRNA ligase (876 aa).

Residue Lys74 is modified to N6-acetyllysine. Positions 564, 568, 666, and 670 each coordinate Zn(2+).

It belongs to the class-II aminoacyl-tRNA synthetase family. Homotetramer. Zn(2+) is required as a cofactor.

The protein resides in the cytoplasm. The catalysed reaction is tRNA(Ala) + L-alanine + ATP = L-alanyl-tRNA(Ala) + AMP + diphosphate. Functionally, catalyzes the attachment of alanine to tRNA(Ala) in a two-step reaction: alanine is first activated by ATP to form Ala-AMP and then transferred to the acceptor end of tRNA(Ala). Also edits incorrectly charged Ser-tRNA(Ala) and Gly-tRNA(Ala) via its editing domain. The polypeptide is Alanine--tRNA ligase (Shigella boydii serotype 4 (strain Sb227)).